A 432-amino-acid chain; its full sequence is Adenylosuccinate synthetase (432 aa).

GTP contacts are provided by residues 13-19 (GDEGKGK) and 41-43 (GHT). Catalysis depends on D14, which acts as the Proton acceptor. D14 and G41 together coordinate Mg(2+). Residues 14–17 (DEGK), 39–42 (NAGH), T130, R144, Q225, T240, and R304 each bind IMP. The Proton donor role is filled by H42. 300–306 (ATTGRKR) is a substrate binding site. GTP-binding positions include R306, 332 to 334 (KLD), and 415 to 417 (STG).

This sequence belongs to the adenylosuccinate synthetase family. Homodimer. Requires Mg(2+) as cofactor.

Its subcellular location is the cytoplasm. The catalysed reaction is IMP + L-aspartate + GTP = N(6)-(1,2-dicarboxyethyl)-AMP + GDP + phosphate + 2 H(+). It participates in purine metabolism; AMP biosynthesis via de novo pathway; AMP from IMP: step 1/2. Its function is as follows. Plays an important role in the de novo pathway of purine nucleotide biosynthesis. Catalyzes the first committed step in the biosynthesis of AMP from IMP. This is Adenylosuccinate synthetase from Vibrio cholerae serotype O1 (strain ATCC 39541 / Classical Ogawa 395 / O395).